Here is a 55-residue protein sequence, read N- to C-terminus: Sec-independent protein translocase protein TatA (55 aa).

A helical transmembrane segment spans residues 1 to 21 (MSLGPWQLFLVLIIILVLFGA).

The protein belongs to the TatA/E family. As to quaternary structure, the Tat system comprises two distinct complexes: a TatABC complex, containing multiple copies of TatA, TatB and TatC subunits, and a separate TatA complex, containing only TatA subunits. Substrates initially bind to the TatABC complex, which probably triggers association of the separate TatA complex to form the active translocon.

The protein resides in the cell membrane. Part of the twin-arginine translocation (Tat) system that transports large folded proteins containing a characteristic twin-arginine motif in their signal peptide across membranes. TatA could form the protein-conducting channel of the Tat system. This chain is Sec-independent protein translocase protein TatA, found in Wolbachia pipientis wMel.